The sequence spans 384 residues: Thylakoid membrane protein TERC, chloroplastic (384 aa).

A chloroplast-targeting transit peptide spans 1–48 (MSLASVIHHGILPPAKSDRIFLTIPVFPPDFRARGWTKSPFSLLINPS). The Stromal segment spans residues 49–115 (LASAANRRLS…DYQQEETYKT (67 aa)). Positions 68 to 104 (GIDQEDEEKESRELLPHKNDENATTSRSSSSVDSGGL) are disordered. A compositionally biased stretch (basic and acidic residues) spans 76–88 (KESRELLPHKNDE). The chain crosses the membrane as a helical span at residues 116–136 (SFKTVALCVGTAVAFGIGIGL). The Lumenal, thylakoid segment spans residues 137-145 (KEGVGKASE). The chain crosses the membrane as a helical span at residues 146–166 (FFAGYILEQSLSVDNLFVFVL). Residues 167–180 (VFKYFKVPLMYQNK) lie on the Stromal side of the membrane. Residues 181–201 (VLTYGIAGAIVFRFTLILLGT) form a helical membrane-spanning segment. Topologically, residues 202–206 (ATLQK) are lumenal, thylakoid. The helical transmembrane segment at 207 to 227 (FEAVNLLLAAVLLYSSFKLFA) threads the bilayer. The Stromal portion of the chain corresponds to 228–275 (SEEDDTDLSDNFIVKTCQRFIPVTSSYDGNRFFTKHDGILKATPLLLT). A helical membrane pass occupies residues 276–296 (VAVIELSDIAFAVDSIPAVFG). The Lumenal, thylakoid portion of the chain corresponds to 297–301 (VTRDP). The chain crosses the membrane as a helical span at residues 302 to 322 (FIVLTSNLFAILGLRSLYTLI). Over 323-335 (SEGMDELEYLQPS) the chain is Stromal. The chain crosses the membrane as a helical span at residues 336-356 (IAVVLGFIGVKMILDFFGFHI). Ser357 is a topological domain (lumenal, thylakoid). A helical transmembrane segment spans residues 358 to 378 (TEASLGVVALSLSTGVLLSLT). The Stromal segment spans residues 379–384 (NKSSDS).

In terms of assembly, interacts with ALB3. In terms of tissue distribution, expressed in roots, rosette and cauline leaves, stems and flowers.

The protein resides in the plastid. The protein localises to the chloroplast thylakoid membrane. In terms of biological role, integral thylakoid membrane protein that plays a crucial role in thylakoid membrane biogenesis and thylakoid formation in early chloroplast development. Is essential for de novo synthesis of photosystem II (PSII) core proteins and required for efficient insertion of thylakoid membrane proteins, presumably via interaction with ALB3. May assist synthesis of thylakoid membrane proteins at the membrane insertion step. The protein is Thylakoid membrane protein TERC, chloroplastic of Arabidopsis thaliana (Mouse-ear cress).